The primary structure comprises 128 residues: Otoraplin (128 aa).

The signal sequence occupies residues 1-17 (MARILLLFLPGLVAVCA). 2 cysteine pairs are disulfide-bonded: cysteine 32–cysteine 37 and cysteine 55–cysteine 127. The SH3 domain occupies 39-110 (YTISLASAQE…PRNLVKEQRV (72 aa)).

Belongs to the MIA/OTOR family. Highly expressed in cochlea.

The protein localises to the secreted. The chain is Otoraplin (OTOR) from Homo sapiens (Human).